The sequence spans 320 residues: Apolipoprotein E (320 aa).

A signal peptide spans 1-18 (MKVLWAAFLVAFLAGCQG). 8 consecutive repeat copies span residues 82–103 (ALMDETMKELKAYKSELEEQLS), 104–125 (PVAEETRARLSKELQAAQARLG), 126–147 (ADMEDVRSRLAQYRSEVQAMLG), 148–169 (QSTDELRARLASHLRKLRKRLL), 170–191 (RDVDDLQKRLAVYQAGAREGAE), 192–213 (RGVSAIRERLGPLVEQGRARAA), 214–236 (TVGSSLASQPLQERAQAWGERLR), and 237–258 (ARMEEVGSRTRDRLDEVKEQVE). The tract at residues 82-199 (ALMDETMKEL…AERGVSAIRE (118 aa)) is 8 X 22 AA approximate tandem repeats. A Methionine sulfoxide modification is found at M145. S149 carries the post-translational modification Phosphoserine. The tract at residues 160 to 170 (HLRKLRKRLLR) is LDL and other lipoprotein receptors binding. A heparin-binding site is contributed by 164-167 (LRKR). Positions 212-293 (AATVGSSLAS…SWFEPLVEDM (82 aa)) are lipid-binding and lipoprotein association. 232–239 (GERLRARM) serves as a coordination point for heparin. Residues 269-320 (QQMRLQAEAFQARLKSWFEPLVEDMQRQWAGLVEKVQAAVGASATPVPSDNH) form a homooligomerization region. The segment at 281–293 (RLKSWFEPLVEDM) is specificity for association with VLDL.

Belongs to the apolipoprotein A1/A4/E family. As to quaternary structure, homotetramer. May interact with ABCA1; functionally associated with ABCA1 in the biogenesis of HDLs. May interact with APP/A4 amyloid-beta peptide; the interaction is extremely stable in vitro but its physiological significance is unclear. May interact with MAPT. May interact with MAP2. In the cerebrospinal fluid, interacts with secreted SORL1. Interacts with PMEL; this allows the loading of PMEL luminal fragment on ILVs to induce fibril nucleation. APOE exists as multiple glycosylated and sialylated glycoforms within cells and in plasma. The extent of glycosylation and sialylation are tissue and context specific. Post-translationally, glycated in plasma VLDL. In terms of processing, phosphorylated by FAM20C in the extracellular medium.

It is found in the secreted. The protein localises to the extracellular space. Its subcellular location is the extracellular matrix. It localises to the extracellular vesicle. The protein resides in the endosome. It is found in the multivesicular body. Functionally, APOE is an apolipoprotein, a protein associating with lipid particles, that mainly functions in lipoprotein-mediated lipid transport between organs via the plasma and interstitial fluids. APOE is a core component of plasma lipoproteins and is involved in their production, conversion and clearance. Apolipoproteins are amphipathic molecules that interact both with lipids of the lipoprotein particle core and the aqueous environment of the plasma. As such, APOE associates with chylomicrons, chylomicron remnants, very low density lipoproteins (VLDL) and intermediate density lipoproteins (IDL) but shows a preferential binding to high-density lipoproteins (HDL). It also binds a wide range of cellular receptors including the LDL receptor/LDLR, the LDL receptor-related proteins LRP1, LRP2 and LRP8 and the very low-density lipoprotein receptor/VLDLR that mediate the cellular uptake of the APOE-containing lipoprotein particles. Finally, APOE also has a heparin-binding activity and binds heparan-sulfate proteoglycans on the surface of cells, a property that supports the capture and the receptor-mediated uptake of APOE-containing lipoproteins by cells. A main function of APOE is to mediate lipoprotein clearance through the uptake of chylomicrons, VLDLs, and HDLs by hepatocytes. APOE is also involved in the biosynthesis by the liver of VLDLs as well as their uptake by peripheral tissues ensuring the delivery of triglycerides and energy storage in muscle, heart and adipose tissues. By participating in the lipoprotein-mediated distribution of lipids among tissues, APOE plays a critical role in plasma and tissues lipid homeostasis. APOE is also involved in two steps of reverse cholesterol transport, the HDLs-mediated transport of cholesterol from peripheral tissues to the liver, and thereby plays an important role in cholesterol homeostasis. First, it is functionally associated with ABCA1 in the biogenesis of HDLs in tissues. Second, it is enriched in circulating HDLs and mediates their uptake by hepatocytes. APOE also plays an important role in lipid transport in the central nervous system, regulating neuron survival and sprouting. The chain is Apolipoprotein E (APOE) from Saimiri boliviensis boliviensis (Bolivian squirrel monkey).